The primary structure comprises 219 residues: Thiamine-phosphate synthase (219 aa).

4-amino-2-methyl-5-(diphosphooxymethyl)pyrimidine-binding positions include 44-48 (QFREK) and asparagine 79. Mg(2+)-binding residues include aspartate 80 and aspartate 99. Serine 117 serves as a coordination point for 4-amino-2-methyl-5-(diphosphooxymethyl)pyrimidine. Position 143–145 (143–145 (TST)) interacts with 2-[(2R,5Z)-2-carboxy-4-methylthiazol-5(2H)-ylidene]ethyl phosphate. Lysine 146 is a binding site for 4-amino-2-methyl-5-(diphosphooxymethyl)pyrimidine. Residues glycine 175 and 195 to 196 (IS) contribute to the 2-[(2R,5Z)-2-carboxy-4-methylthiazol-5(2H)-ylidene]ethyl phosphate site.

The protein belongs to the thiamine-phosphate synthase family. The cofactor is Mg(2+).

The catalysed reaction is 2-[(2R,5Z)-2-carboxy-4-methylthiazol-5(2H)-ylidene]ethyl phosphate + 4-amino-2-methyl-5-(diphosphooxymethyl)pyrimidine + 2 H(+) = thiamine phosphate + CO2 + diphosphate. It carries out the reaction 2-(2-carboxy-4-methylthiazol-5-yl)ethyl phosphate + 4-amino-2-methyl-5-(diphosphooxymethyl)pyrimidine + 2 H(+) = thiamine phosphate + CO2 + diphosphate. It catalyses the reaction 4-methyl-5-(2-phosphooxyethyl)-thiazole + 4-amino-2-methyl-5-(diphosphooxymethyl)pyrimidine + H(+) = thiamine phosphate + diphosphate. Its pathway is cofactor biosynthesis; thiamine diphosphate biosynthesis; thiamine phosphate from 4-amino-2-methyl-5-diphosphomethylpyrimidine and 4-methyl-5-(2-phosphoethyl)-thiazole: step 1/1. Functionally, condenses 4-methyl-5-(beta-hydroxyethyl)thiazole monophosphate (THZ-P) and 2-methyl-4-amino-5-hydroxymethyl pyrimidine pyrophosphate (HMP-PP) to form thiamine monophosphate (TMP). The polypeptide is Thiamine-phosphate synthase (Bacillus thuringiensis subsp. konkukian (strain 97-27)).